The primary structure comprises 494 residues: Ribosomal lysine N-methyltransferase 4 (494 aa).

One can recognise an SET domain in the interval 25–265 (PKIEIKDLCC…KNEQVYNIYG (241 aa)). Residue tyrosine 264 participates in S-adenosyl-L-methionine binding.

The protein belongs to the class V-like SAM-binding methyltransferase superfamily. Histone-lysine methyltransferase family. SETD6 subfamily.

The protein localises to the nucleus. Its function is as follows. S-adenosyl-L-methionine-dependent protein-lysine N-methyltransferase that monomethylates 60S ribosomal protein L42 (RPL42A and RPL42B) at 'Lys-55'. The chain is Ribosomal lysine N-methyltransferase 4 from Saccharomyces cerevisiae (strain ATCC 204508 / S288c) (Baker's yeast).